The sequence spans 295 residues: Acetylglutamate kinase (295 aa).

Residues 67-68 (GG), R89, and N191 each bind substrate.

The protein belongs to the acetylglutamate kinase family. ArgB subfamily.

The protein resides in the cytoplasm. The enzyme catalyses N-acetyl-L-glutamate + ATP = N-acetyl-L-glutamyl 5-phosphate + ADP. Its pathway is amino-acid biosynthesis; L-arginine biosynthesis; N(2)-acetyl-L-ornithine from L-glutamate: step 2/4. Catalyzes the ATP-dependent phosphorylation of N-acetyl-L-glutamate. This Nitrosomonas eutropha (strain DSM 101675 / C91 / Nm57) protein is Acetylglutamate kinase.